The sequence spans 864 residues: MSKSAVSPMMQQYLGIKAQHTDKLVFYRMGDFYELFLDDAVEAAKLLDITLTTRGQMDGVPIKMAGVPFHAAEQYLARLVKLGKSVAICEQVGEVGAGKGPVERKVVRIVTPGTLTDSALLEDKETNRIVAVSPDKKYIGLAWASLQSGEFKTKLTTADKLNDELARLQAAEILLPDSKNAPQLQTASGVTRLNAWQFAADAGEKLLTEYFGCQDLRGFGLDSKEHAVSIGAAGALLNYIRLTQNLMPQHLDGLSLETDSQYIGMDAATRRNLEITQTLSGKKTPTLFSILDGCATHMGSRLLALWLHHPLRNRAHIRARQEAVTALESQYEPLQCHLKSIADIERIAARIAVGNARPRDLASLRDSLFELAQIDLSATGSSLLETLKAVFPETLPVAETLKAAVMPEPSVWLKDGNVINHGFHPELDELRRIQNHGDEFLLDLEAKERERTGLSTLKVEFNRVHGFYIELSKTQAEQAPADYQRRQTLKNAERFITPELKAFEDKVLTAQDQALALEKQLFDGVLKNLRTALPQLQKAAKAAAALDVLSTFSALAKERNFVRPEFADYPVVHIENGRHPVVEQQVRHFTANHTDLDHKHRLMLLTGPNMGGKSTYMRQVALIVLLAHTGCFVPADAATIGPVDQIFTRIGASDDLASNRSTFMVEMSETAYILHHATEQSIVLMDEVGRGTSTFDGLALAHAIAEHLLQKNKSFSLFATHYFELTYLPEAHAAAVNMHLSALEQGRDIVFLHQIQPGPAGKSYGIAVAKLAGLPVRALKAAQKHLNGLENQAAANRPQLDIFSTMPSEKGDEPNVDCFVDKAEEKHFEGILAAALENLDPDSLTPREALSELYRLKDLCKSVS.

Residue 607–614 (GPNMGGKS) participates in ATP binding.

The protein belongs to the DNA mismatch repair MutS family.

In terms of biological role, this protein is involved in the repair of mismatches in DNA. It is possible that it carries out the mismatch recognition step. This protein has a weak ATPase activity. This Neisseria gonorrhoeae (strain ATCC 700825 / FA 1090) protein is DNA mismatch repair protein MutS.